Here is a 338-residue protein sequence, read N- to C-terminus: UDP-glucose 4-epimerase (338 aa).

NAD(+)-binding positions include 16–17, 37–42, 59–60, 81–85, threonine 126, tyrosine 153, lysine 157, and phenylalanine 181; these read YI, IDINHT, NL, and FAAKT. Substrate contacts are provided by threonine 126 and tyrosine 153. Tyrosine 153 functions as the Proton acceptor in the catalytic mechanism. Residues asparagine 182, 198–199, 215–217, arginine 230, and 294–297 contribute to the substrate site; these read TL, FLY, and RAGD.

The protein belongs to the NAD(P)-dependent epimerase/dehydratase family. Homodimer. The cofactor is NAD(+).

It catalyses the reaction UDP-alpha-D-glucose = UDP-alpha-D-galactose. It functions in the pathway carbohydrate metabolism; galactose metabolism. Involved in the metabolism of galactose. Catalyzes the conversion of UDP-galactose (UDP-Gal) to UDP-glucose (UDP-Glc) through a mechanism involving the transient reduction of NAD. The sequence is that of UDP-glucose 4-epimerase (galE) from Mycoplasma pneumoniae (strain ATCC 29342 / M129 / Subtype 1) (Mycoplasmoides pneumoniae).